The primary structure comprises 504 residues: Transcription factor NDT80 (504 aa).

Disordered stretches follow at residues 64 to 172 (MHFN…QHHM), 283 to 310 (NGFPPHHPSHPQNQPQNHPGHPHHNQHA), and 477 to 504 (RGRSPSSYHKDRTSGYRATNTPTPTPPQ). Low complexity-rich tracts occupy residues 73-87 (QQQQQQQQQQQQQQQ), 103-145 (QGPT…ARQP), 153-172 (QQAQNQDQADAQSQAQQHHM), and 292-301 (HPQNQPQNHP). A DNA-binding region (NDT80) is located at residues 160–488 (QADAQSQAQQ…RSPSSYHKDR (329 aa)).

The protein resides in the nucleus. In terms of biological role, meiosis-specific transcription factor that binds to the middle sporulation element (MSE) of targeted genes corresponding to the consensus sequence 5'-ACACAAA-3'. Acts as an activator of CDR1 induction by antifungal drugs. Modulates azole sensitivity by controlling the expression of ergosterol biosynthesis genes. Required for hyphal growth in response to different filament-inducing cues and for the proper expression of genes characterizing the filamentous transcriptional program including noteworthy genes encoding cell wall components, such as HWP1, ECE1, RBT4, and ALS3. Is essential for the completion of cell separation through the direct transcriptional regulation of genes encoding the chitinase CHT3 and the cell wall glucosidase SUN41. Required for biofilm formation and plays a key role in microcolony formation under both flow and static conditions and to epithelial surfaces. Essential for virulence. The chain is Transcription factor NDT80 from Candida albicans (strain SC5314 / ATCC MYA-2876) (Yeast).